Here is a 165-residue protein sequence, read N- to C-terminus: Large ribosomal subunit protein uL30 (165 aa).

The protein belongs to the universal ribosomal protein uL30 family. Part of the 50S ribosomal subunit.

The protein is Large ribosomal subunit protein uL30 of Thermoplasma acidophilum (strain ATCC 25905 / DSM 1728 / JCM 9062 / NBRC 15155 / AMRC-C165).